The following is a 343-amino-acid chain: Leucine-rich repeat-containing protein 23 (343 aa).

Residues 1 to 30 (MSDEDDLEDSEPDQDDSEKEEDEKETEEGE) are compositionally biased toward acidic residues. Residues 1-47 (MSDEDDLEDSEPDQDDSEKEEDEKETEEGEDYRKEGEEFPEEWLPTP) form a disordered region. 8 LRR repeats span residues 92 to 113 (HLRYVDISENHLTDLSPLNYLT), 114 to 134 (HLLWLKADGNRLRSAQMNELP), 135 to 155 (YLQIASFAYNQITDTEGISHP), 156 to 177 (RLETLNLKGNSIHMVTGLDPEK), 180 to 200 (SLHTVELRGNQLESTLGINLP), 201 to 222 (KLKNLYLAQNMLKKVEGLEDLS), 223 to 244 (NLTTLHLRDNQIDTLSGFSREM), and 246 to 267 (SLQYLNLRGNMVANLGELAKLR). Residues 208 to 343 (AQNMLKKVEG…RDLEPEQSLI (136 aa)) form an interaction with RSPH9 region. The LRRCT domain maps to 280-318 (NPCTDETSYRQEALVQMPYLERLDKEFYEEEERAEADVI). A coiled-coil region spans residues 307–329 (YEEEERAEADVIRQRLKEEKEQE). The span at 318–337 (IRQRLKEEKEQEPEPQRDLE) shows a compositional bias: basic and acidic residues. Residues 318 to 343 (IRQRLKEEKEQEPEPQRDLEPEQSLI) form a disordered region.

Component of the axonemal radial spoke complex. Interacts with RSPH3. Interacts with RSPH9. As to expression, expressed in spermatozoa.

The protein resides in the cell projection. Its subcellular location is the cilium. It is found in the flagellum. The protein localises to the cytoplasm. It localises to the cytoskeleton. The protein resides in the flagellum axoneme. Its function is as follows. Essential for sperm motility and male fertility. Plays an important role in the proper assembly of the third radial spoke (RS3) head and the bridge structure between RS2 and RS3 in the sperm flagella. This chain is Leucine-rich repeat-containing protein 23 (LRRC23), found in Homo sapiens (Human).